The following is a 1389-amino-acid chain: Carboxypeptidase D (1389 aa).

An N-terminal signal peptide occupies residues 1-25 (MAGAARGLLWAALSLCLLPEPLRAA). Topologically, residues 26–1308 (HIKKAEAAAA…ENRIFGLPRE (1283 aa)) are extracellular. Residues 46-383 (RYLHAAELGQ…ESLLTFIEKV (338 aa)) enclose the Peptidase M14 1 domain. Residues 95–133 (LPEARQDGEKKKKEEEEEEEEEEGEEGGGGALPGRPQVK) are disordered. Over residues 96-108 (PEARQDGEKKKKE) the composition is skewed to basic and acidic residues. Positions 109–120 (EEEEEEEEEGEE) are enriched in acidic residues. 2 residues coordinate Zn(2+): H139 and E142. The N-linked (GlcNAc...) asparagine glycan is linked to N172. A disordered region spans residues 188 to 235 (ERAREGDCGGGGGGGGEGGGEPGGRENSRGRDLNRSFPDQFGSAQPDL). Positions 195–209 (CGGGGGGGGEGGGEP) are enriched in gly residues. Positions 210–221 (GGRENSRGRDLN) are enriched in basic and acidic residues. An N-linked (GlcNAc...) asparagine glycan is attached at N221. A Zn(2+)-binding site is contributed by H260. The Proton donor/acceptor role is filled by E353. 4 N-linked (GlcNAc...) asparagine glycosylation sites follow: N402, N413, N432, and N472. A Peptidase M14 2 domain is found at 511–801 (RHHHFSDMEI…RSLLQFIKQV (291 aa)). Zn(2+) is bound by residues H573 and E576. A disordered region spans residues 614–639 (SMNPDGYEKSQEGDRGGTVGRNNSNN). Residues 619-628 (GYEKSQEGDR) show a composition bias toward basic and acidic residues. An N-linked (GlcNAc...) asparagine glycan is attached at N635. H680 contributes to the Zn(2+) binding site. E771 functions as the Proton donor/acceptor in the catalytic mechanism. N-linked (GlcNAc...) asparagine glycosylation is found at N820, N876, N958, N981, N1073, and N1151. The 286-residue stretch at 935 to 1220 (RYRPYKDLSE…KSLLSMLVEV (286 aa)) folds into the Peptidase M14 3 domain. A helical membrane pass occupies residues 1309–1329 (LVVTVAGASMSALVLTACIIW). Residues C1326, C1330, and C1332 are each lipidated (S-palmitoyl cysteine). Residues 1330-1389 (CVCSIKSNRHKDGFPTLRQHHDDYEDEIRMMSTGSKKSLLSHEFQDETDTEEETLYSSKH) lie on the Cytoplasmic side of the membrane. The tract at residues 1367–1389 (SLLSHEFQDETDTEEETLYSSKH) is disordered.

This sequence belongs to the peptidase M14 family. In terms of assembly, binds to pre-S, hepatitis B virus large envelope protein, via the carboxypeptidase-like domain. Zn(2+) serves as cofactor. In terms of processing, the N-terminus is blocked. Expressed in liver, lung, kidney, heart, stomach, pancreas, spleen, gall bladder and intestine, but not in skeletal muscle.

It localises to the cell membrane. The enzyme catalyses Releases C-terminal Arg and Lys from polypeptides.. This chain is Carboxypeptidase D (CPD), found in Anas platyrhynchos (Mallard).